Reading from the N-terminus, the 324-residue chain is NADH-ubiquinone oxidoreductase chain 1 (324 aa).

8 consecutive transmembrane segments (helical) span residues 9-29, 75-95, 106-126, 142-162, 177-197, 228-248, 259-279, and 300-320; these read LTMALSYAVPILIAVAFLTLV, ILFIATPILALLLAITIWIPL, LGLLFLLSMSSLAVYSILWSG, VAQTISYEVTLAIILLSVIML, PLYLIFSTWPLAMMWYISTLA, LFFLAEYANIMLMNTLTAILF, ELFPLILATKTLLLSSGFLWV, and LPLTLALCLWHTSLPISYAGI.

This sequence belongs to the complex I subunit 1 family.

The protein resides in the mitochondrion inner membrane. It catalyses the reaction a ubiquinone + NADH + 5 H(+)(in) = a ubiquinol + NAD(+) + 4 H(+)(out). In terms of biological role, core subunit of the mitochondrial membrane respiratory chain NADH dehydrogenase (Complex I) that is believed to belong to the minimal assembly required for catalysis. Complex I functions in the transfer of electrons from NADH to the respiratory chain. The immediate electron acceptor for the enzyme is believed to be ubiquinone. The chain is NADH-ubiquinone oxidoreductase chain 1 (MT-ND1) from Struthio camelus (Common ostrich).